The following is a 166-amino-acid chain: Transmembrane protein 190 (166 aa).

The N-terminal stretch at 1-21 (MVGSGISALGLLLLMQGSVDA) is a signal peptide. Topologically, residues 22–81 (NGIQGFFYPWSCEGDVWDRESCGGQAAIENPNLCLRLRCCYRDGVCYHQRPDENMRRKHM) are extracellular. The P-type domain occupies 31–71 (WSCEGDVWDRESCGGQAAIENPNLCLRLRCCYRDGVCYHQR). 3 cysteine pairs are disulfide-bonded: Cys-33-Cys-61, Cys-43-Cys-60, and Cys-55-Cys-67. Residues 82-102 (WALGWTCGSLLFLITSICLFW) form a helical membrane-spanning segment. The Cytoplasmic segment spans residues 103 to 166 (WARRQDMLHL…VSGEDTGGEE (64 aa)). The interval 130-166 (LSKDRRSANKSTTVLQSPGGEVETAAAVSGEDTGGEE) is disordered.

In terms of tissue distribution, detected in testis and in a mixture of spermatogenic cells at various stages (testicular germ cells). Not detected in heart, brain, spleen, lung, liver, skeletal muscle and kidney.

It is found in the membrane. This Mus musculus (Mouse) protein is Transmembrane protein 190 (Tmem190).